The sequence spans 149 residues: Calmodulin-5/6/7/8 (149 aa).

Ala2 carries the post-translational modification N-acetylalanine. 4 consecutive EF-hand domains span residues 8 to 43 (DQIS…LGQN), 44 to 79 (PTEA…KMKD), 81 to 116 (DSEE…LGEK), and 117 to 149 (LTDE…MMAK). 14 residues coordinate Ca(2+): Asp21, Asp23, Asp25, Cys27, Glu32, Asp57, Asp59, Asn61, Thr63, Glu68, Asp94, Asp96, Asn98, and Glu105. Residue Lys116 is modified to N6,N6,N6-trimethyllysine. Ca(2+) contacts are provided by Asp130, Asp132, Asp134, Gln136, and Glu141.

Belongs to the calmodulin family. In terms of tissue distribution, high expression of PCM5 and 8 in stolon tips and stems, moderate in roots, and low in leaves. Steady-state expression of PCM6 in all the tissues tested, except in the leaves where the expression is lower.

Its function is as follows. Calmodulin mediates the control of a large number of enzymes, ion channels and other proteins by Ca(2+). Among the enzymes to be stimulated by the calmodulin-Ca(2+) complex are a number of protein kinases and phosphatases. The sequence is that of Calmodulin-5/6/7/8 (PCM5) from Solanum tuberosum (Potato).